The chain runs to 352 residues: Protein RecA (352 aa).

67–74 (GPESSGKT) is a binding site for ATP. Residues 332–352 (VKPADAESKEDSPKLKAVDGF) are disordered. Residues 335 to 352 (ADAESKEDSPKLKAVDGF) show a composition bias toward basic and acidic residues.

It belongs to the RecA family.

Its subcellular location is the cytoplasm. In terms of biological role, can catalyze the hydrolysis of ATP in the presence of single-stranded DNA, the ATP-dependent uptake of single-stranded DNA by duplex DNA, and the ATP-dependent hybridization of homologous single-stranded DNAs. It interacts with LexA causing its activation and leading to its autocatalytic cleavage. The sequence is that of Protein RecA from Pseudarthrobacter chlorophenolicus (strain ATCC 700700 / DSM 12829 / CIP 107037 / JCM 12360 / KCTC 9906 / NCIMB 13794 / A6) (Arthrobacter chlorophenolicus).